A 420-amino-acid chain; its full sequence is Glutamate-1-semialdehyde 2,1-aminomutase (420 aa).

The residue at position 259 (Lys-259) is an N6-(pyridoxal phosphate)lysine.

It belongs to the class-III pyridoxal-phosphate-dependent aminotransferase family. HemL subfamily. The cofactor is pyridoxal 5'-phosphate.

The protein resides in the cytoplasm. The catalysed reaction is (S)-4-amino-5-oxopentanoate = 5-aminolevulinate. The protein operates within porphyrin-containing compound metabolism; protoporphyrin-IX biosynthesis; 5-aminolevulinate from L-glutamyl-tRNA(Glu): step 2/2. This is Glutamate-1-semialdehyde 2,1-aminomutase (hemL) from Methanothermobacter thermautotrophicus (strain ATCC 29096 / DSM 1053 / JCM 10044 / NBRC 100330 / Delta H) (Methanobacterium thermoautotrophicum).